A 177-amino-acid chain; its full sequence is MANPSKIEAVTELKTRLEKRPNFILASYSGLTVEDMSNLRAKLRKEGSEMKVIKNNLFLRALKESSEHKNNSIDFGDVYKGPLAAIFSLDALPAVAKVCKDFAKDKKELEIKTGYMDGEVLGKSGVEAIAGLPSKQELLAQVARGINAPATQIASGINQIMASLARAINAVAEKNGN.

The protein belongs to the universal ribosomal protein uL10 family. Part of the ribosomal stalk of the 50S ribosomal subunit. The N-terminus interacts with L11 and the large rRNA to form the base of the stalk. The C-terminus forms an elongated spine to which L12 dimers bind in a sequential fashion forming a multimeric L10(L12)X complex.

Forms part of the ribosomal stalk, playing a central role in the interaction of the ribosome with GTP-bound translation factors. The chain is Large ribosomal subunit protein uL10 from Leptospira biflexa serovar Patoc (strain Patoc 1 / Ames).